The sequence spans 184 residues: Trichothecene 15-O-acetyltransferase SAT16 (184 aa).

Position 154 (histidine 154) interacts with substrate.

Belongs to the trichothecene O-acetyltransferase family.

The protein operates within mycotoxin biosynthesis. In terms of biological role, trichothecene 15-O-acetyltransferase; part of the satratoxin SC2 cluster involved in the biosynthesis of satratoxins, trichothecene mycotoxins that are associated with human food poisonings. Satratoxins are suggested to be made by products of multiple gene clusters (SC1, SC2 and SC3) that encode 21 proteins in all, including polyketide synthases, acetyltransferases, and other enzymes expected to modify the trichothecene skeleton. SC1 encodes 10 proteins, SAT1 to SAT10. The largest are SAT8, which encodes a putative polyketide synthase (PKS) with a conventional non-reducing architecture, and SAT10, a putative protein containing four ankyrin repeats and thus may be involved in protein scaffolding. The putative short-chain reductase SAT3 may assist the PKS in some capacity. SAT6 contains a secretory lipase domain and acts probably as a trichothecene esterase. SAT5 encodes a putative acetyltransferase, and so, with SAT6, may affect endogenous protection from toxicity. The probable transcription factor SAT9 may regulate the expression of the SC1 cluster. SC2 encodes proteins SAT11 to SAT16, the largest of which encodes the putative reducing PKS SAT13. SAT11 is a cytochrome P450 monooxygenase, while SAT14 and SAT16 are probable acetyltransferases. The SC2 cluster may be regulated by the transcription factor SAT15. SC3 is a small cluster that encodes 5 proteins, SAT17 to SAT21. SAT21 is a putative MFS-type transporter which may have a role in exporting secondary metabolites. The four other proteins putatively encoded in SC3 include the taurine hydroxylase-like protein SAT17, the O-methyltransferase SAT18, the acetyltransferase SAT19, and the Cys6-type zinc finger SAT20, the latter being probably involved in regulation of SC3 expression. The protein is Trichothecene 15-O-acetyltransferase SAT16 of Stachybotrys chartarum (strain CBS 109288 / IBT 7711) (Toxic black mold).